A 185-amino-acid polypeptide reads, in one-letter code: Large ribosomal subunit protein bL25 (185 aa).

This sequence belongs to the bacterial ribosomal protein bL25 family. CTC subfamily. In terms of assembly, part of the 50S ribosomal subunit; part of the 5S rRNA/L5/L18/L25 subcomplex. Contacts the 5S rRNA. Binds to the 5S rRNA independently of L5 and L18.

Its function is as follows. This is one of the proteins that binds to the 5S RNA in the ribosome where it forms part of the central protuberance. The protein is Large ribosomal subunit protein bL25 of Chlamydia trachomatis serovar A (strain ATCC VR-571B / DSM 19440 / HAR-13).